A 154-amino-acid polypeptide reads, in one-letter code: S-protein homolog 12 (154 aa).

An N-terminal signal peptide occupies residues M1–G30.

Belongs to the plant self-incompatibility (S1) protein family.

It localises to the secreted. This chain is S-protein homolog 12, found in Arabidopsis thaliana (Mouse-ear cress).